A 169-amino-acid chain; its full sequence is Dihydrofolate reductase type 8 (169 aa).

Residues 3–169 (ELHAILAATA…FTYRKKELTE (167 aa)) form the DHFR domain.

Belongs to the dihydrofolate reductase family. In terms of assembly, homodimer.

It catalyses the reaction (6S)-5,6,7,8-tetrahydrofolate + NADP(+) = 7,8-dihydrofolate + NADPH + H(+). It functions in the pathway cofactor biosynthesis; tetrahydrofolate biosynthesis; 5,6,7,8-tetrahydrofolate from 7,8-dihydrofolate: step 1/1. Key enzyme in folate metabolism. Catalyzes an essential reaction for de novo glycine and purine synthesis, and for DNA precursor synthesis. This is Dihydrofolate reductase type 8 (dhfrVIII) from Escherichia coli.